We begin with the raw amino-acid sequence, 364 residues long: S-adenosylmethionine:tRNA ribosyltransferase-isomerase (364 aa).

It belongs to the QueA family. In terms of assembly, monomer.

The protein localises to the cytoplasm. The catalysed reaction is 7-aminomethyl-7-carbaguanosine(34) in tRNA + S-adenosyl-L-methionine = epoxyqueuosine(34) in tRNA + adenine + L-methionine + 2 H(+). The protein operates within tRNA modification; tRNA-queuosine biosynthesis. Transfers and isomerizes the ribose moiety from AdoMet to the 7-aminomethyl group of 7-deazaguanine (preQ1-tRNA) to give epoxyqueuosine (oQ-tRNA). The sequence is that of S-adenosylmethionine:tRNA ribosyltransferase-isomerase from Synechococcus sp. (strain CC9902).